Consider the following 224-residue polypeptide: TBP-related factor (224 aa).

Residues 14–34 (RDNVAATSNAAANPHAALQPQ) form a disordered region. Residues 17–34 (VAATSNAAANPHAALQPQ) are compositionally biased toward low complexity. A run of 2 repeats spans residues 51–127 (LQNI…ARIL) and 141–218 (LQNI…SPIL).

This sequence belongs to the TBP family. Primary spermatocytes in the adult testis and in a subset of cells in the dorsal medial region of the embryonic CNS.

The protein resides in the nucleus. Its function is as follows. Acts as a transcription factor. Binds to the TATA box promoter element which lies close to the position of transcription initiation. Functionally, may be essential for embryonic development. In Drosophila melanogaster (Fruit fly), this protein is TBP-related factor (Trf).